Reading from the N-terminus, the 307-residue chain is MFFKVCQLGKGRCCQVLLNYASCQRCQLSSYKGTPRLIKAVQGSSKDQQLAGQVQRFGEDSWFVHSAPKSETMGVADGVGGWRQMGIDSGVFAKQLMTNCSKLSEQADYDGRNPRQLLIDGYHRLKEHATNVWGSSTACLVSLHRSDCTLHSANLGDSGFLVLRHGKVLHRSDEQLHVFNTPYQLSVPPTSQMHKVLSDQPEEAICTQLGLQQGDLVLVATDGLFDNVVESELVQQLQQLHGETRVEKVQLAANRLVDLAKRLSLRTDYQSPFALRAKANNMNYGAGGKPDDITVILASVEVSQRSN.

The 260-residue stretch at 41-300 (VQGSSKDQQL…DDITVILASV (260 aa)) folds into the PPM-type phosphatase domain. The Mn(2+) site is built by D77, G78, and D222.

This sequence belongs to the PP2C family. Mg(2+) serves as cofactor. Mn(2+) is required as a cofactor.

The catalysed reaction is O-phospho-L-seryl-[protein] + H2O = L-seryl-[protein] + phosphate. It catalyses the reaction O-phospho-L-threonyl-[protein] + H2O = L-threonyl-[protein] + phosphate. In Drosophila grimshawi (Hawaiian fruit fly), this protein is Protein phosphatase PTC7 homolog fig.